Reading from the N-terminus, the 534-residue chain is Envelope glycoprotein (534 aa).

Positions 1–34 (MEGPTHPKPSKDKTFSWDLMILVGVLLRLDVGMA) are cleaved as a signal peptide. The Extracellular segment spans residues 35–534 (NPSPHQIYNV…SLTSLSEVVL (500 aa)). Residues Asn43 and Asn58 are each glycosylated (N-linked (GlcNAc...) asparagine; by host). Intrachain disulfides connect Cys115/Cys132 and Cys124/Cys137. Residues 245–279 (AMGPNLVLPDQKPPSRQSQIESRVTPHHSQGNGGT) form a disordered region. Over residues 258 to 274 (PSRQSQIESRVTPHHSQ) the composition is skewed to polar residues. Asn286, Asn322, and Asn327 each carry an N-linked (GlcNAc...) asparagine; by host glycan. Positions 332-335 (CWLC) match the CXXC motif. 3 N-linked (GlcNAc...) asparagine; by host glycosylation sites follow: Asn351, Asn354, and Asn430. A fusion peptide region spans residues 468-488 (ISLTVALMLGGLTVGGIAAGV). The stretch at 496-534 (LETAQFRQLQMAMHTDIQALEESISALEKSLTSLSEVVL) forms a coiled coil.

The mature envelope protein (Env) consists of a trimer of SU-TM heterodimers attached by noncovalent interactions or by a labile interchain disulfide bond. Post-translationally, specific enzymatic cleavages in vivo yield mature proteins. Envelope glycoproteins are synthesized as an inactive precursor that is N-glycosylated and processed likely by host cell furin or by a furin-like protease in the Golgi to yield the mature SU and TM proteins. The cleavage site between SU and TM requires the minimal sequence [KR]-X-[KR]-R.

The protein resides in the virion membrane. It localises to the host cell membrane. Functionally, the surface protein (SU) attaches the virus to the host cell by binding to its receptor. This interaction triggers the refolding of the transmembrane protein (TM) and is thought to activate its fusogenic potential by unmasking its fusion peptide. Fusion occurs at the host cell plasma membrane. In terms of biological role, the transmembrane protein (TM) acts as a class I viral fusion protein. Under the current model, the protein has at least 3 conformational states: pre-fusion native state, pre-hairpin intermediate state, and post-fusion hairpin state. During viral and target cell membrane fusion, the coiled coil regions (heptad repeats) assume a trimer-of-hairpins structure, positioning the fusion peptide in close proximity to the C-terminal region of the ectodomain. The formation of this structure appears to drive apposition and subsequent fusion of viral and target cell membranes. Membranes fusion leads to delivery of the nucleocapsid into the cytoplasm. This Feline sarcoma virus (strain Snyder-Theilen) protein is Envelope glycoprotein (env).